The primary structure comprises 230 residues: Endonuclease NucS (230 aa).

It belongs to the NucS endonuclease family.

It localises to the cytoplasm. Functionally, cleaves both 3' and 5' ssDNA extremities of branched DNA structures. This Corynebacterium efficiens (strain DSM 44549 / YS-314 / AJ 12310 / JCM 11189 / NBRC 100395) protein is Endonuclease NucS.